The chain runs to 75 residues: MTIFNSISSISNPTRSTSSSIATLNYTGSVFNDNSTACFDNDLGRWGGCGGCGGSNVNIINLDIDIGRRRHRRCC.

The protein belongs to the UPF0512 family.

This is UPF0512 protein C from Dictyostelium discoideum (Social amoeba).